The following is a 294-amino-acid chain: Acetylglutamate kinase (294 aa).

Substrate contacts are provided by residues 67–68 (GG), R89, and N191.

It belongs to the acetylglutamate kinase family. ArgB subfamily.

It is found in the cytoplasm. The enzyme catalyses N-acetyl-L-glutamate + ATP = N-acetyl-L-glutamyl 5-phosphate + ADP. It participates in amino-acid biosynthesis; L-arginine biosynthesis; N(2)-acetyl-L-ornithine from L-glutamate: step 2/4. Functionally, catalyzes the ATP-dependent phosphorylation of N-acetyl-L-glutamate. This chain is Acetylglutamate kinase, found in Methylobacillus flagellatus (strain ATCC 51484 / DSM 6875 / VKM B-1610 / KT).